The primary structure comprises 353 residues: Terpene synthase 3 (353 aa).

Residues Asp-118, Asn-261, and Glu-269 each coordinate Mg(2+). The D(D/E)XX(D/E) motif motif lies at 118–122; sequence DDLLE. Residues 261-269 carry the NSE motif motif; the sequence is NDTFLLKKE. Positions 342–349 match the WxxxxxRY motif motif; sequence WCSKTTRY.

The protein belongs to the terpene synthase family. Mg(2+) serves as cofactor.

Functionally, terpene synthase that may be involved in the production of volatile terpenoids. Does not show detectable terpene products with either farnesyl diphosphate (FPP) or geranyl diphosphate (GPP). P.polycephalum has a unique biology and these volatile terpenoids could function in internal communication of P.polycephalum, to mark the territory that have been explored, or they may be involved in chemotaxis. The chain is Terpene synthase 3 from Physarum polycephalum (Slime mold).